A 368-amino-acid polypeptide reads, in one-letter code: MAPSTLTALAQEKTLNSKFVRDEDERPKIAYNKFSDEIPVISLAGIDDDSVDKRSQICRKIVEACEDWGIFQVVDHGIDIDLISEMTRLARQFFALPAEEKLRFDMTGGKKGGFIVSSHLQGEAVQDWREIVTYFSYPIQARDYSRWPDKPEGWRSITEMYSDELMALACKLLEVLSEAMGLEKEGLTKACVDMDQKVIVNYYPKCPQPNLTLGLKRHTDPGTITLLLQDQVGGLQATRDGGKTWITVQPVEGAFVVNLGDHGHYLSNGRFKNADHQAVVNSNSSRMSIATFQNPAPNATVYPLKIREGEKAVMEEPITFAEMYKRKMSRDIEMATLKKLAKEKVLQDQEVEKAKLQMTPKSADEIFA.

The 105-residue stretch at 191-295 folds into the Fe2OG dioxygenase domain; that stretch reads CVDMDQKVIV…RMSIATFQNP (105 aa). Positions 218, 220, and 276 each coordinate Fe cation. Arginine 286 is a binding site for 2-oxoglutarate.

Belongs to the iron/ascorbate-dependent oxidoreductase family. It depends on Fe(2+) as a cofactor. The cofactor is L-ascorbate.

It carries out the reaction a (2S)-flavan-4-one + 2-oxoglutarate + O2 = a (2R,3R)-dihydroflavonol + succinate + CO2. The protein operates within secondary metabolite biosynthesis; flavonoid biosynthesis. Functionally, involved in the conversion of (2S)-naringenin to (+)-(2R/3R)-dihydrokaempferol. This chain is Flavanone 3-dioxygenase (FHT), found in Petroselinum crispum (Parsley).